Consider the following 367-residue polypeptide: Phosphoribosylaminoimidazole-succinocarboxamide synthase (367 aa).

The protein belongs to the SAICAR synthetase family.

It catalyses the reaction 5-amino-1-(5-phospho-D-ribosyl)imidazole-4-carboxylate + L-aspartate + ATP = (2S)-2-[5-amino-1-(5-phospho-beta-D-ribosyl)imidazole-4-carboxamido]succinate + ADP + phosphate + 2 H(+). The protein operates within purine metabolism; IMP biosynthesis via de novo pathway; 5-amino-1-(5-phospho-D-ribosyl)imidazole-4-carboxamide from 5-amino-1-(5-phospho-D-ribosyl)imidazole-4-carboxylate: step 1/2. This is Phosphoribosylaminoimidazole-succinocarboxamide synthase from Shewanella baltica (strain OS155 / ATCC BAA-1091).